The chain runs to 199 residues: Chaperone protein TorD (199 aa).

Belongs to the TorD/DmsD family. TorD subfamily.

It is found in the cytoplasm. Involved in the biogenesis of TorA. Acts on TorA before the insertion of the molybdenum cofactor and, as a result, probably favors a conformation of the apoenzyme that is competent for acquiring the cofactor. In Actinobacillus pleuropneumoniae serotype 3 (strain JL03), this protein is Chaperone protein TorD.